The primary structure comprises 208 residues: Protein Nef (208 aa).

A disordered region spans residues 1-33 (MGGKWSKRMSGWSAVRERMKRAEPAEPAADGVG). A lipid anchor (N-myristoyl glycine; by host) is attached at G2. S6 is subject to Phosphoserine; by host. A compositionally biased stretch (basic and acidic residues) spans 15–24 (VRERMKRAEP). Residues 64–67 (EDED) are acidic; interacts with host PACS1 and PACS2; stabilizes the interaction of NEF/MHC-I with host AP1M1; necessary for MHC-I internalization. An SH3-binding; interaction with Src family tyrosine kinases region spans residues 71-80 (PVRPQVPLRP). The PxxP; stabilizes the interaction of NEF/MHC-I with host AP1M1; necessary for MHC-I internalization signature appears at 74–77 (PQVP). The mediates dimerization, Nef-PTE1 interaction stretch occupies residues 110–126 (DILDLWIHHTQGYFPDW). A binding to ATP6V1H region spans residues 150–182 (VDPDYVEEANAGENNSLLHPMSQHGMDDPEKEV). Residues 166–167 (LL) carry the Dileucine internalization motif; necessary for CD4 internalization motif. Residues 176-177 (DD) carry the Diacidic; necessary for CD4 internalization motif.

Belongs to the lentivirus primate group Nef protein family. In terms of assembly, monomer; cytosolic form. Homodimer; membrane bound form. Interacts with Nef associated p21-activated kinase (PAK2); this interaction activates PAK2. Associates with the Nef-MHC-I-AP1 complex; this complex is required for MHC-I internalization. Interacts (via C-terminus) with host PI3-kinase. Interacts with host PACS1; this interaction seems to be weak. Interacts with host PACS2. Interacts with host LCK and MAPK3; these interactions inhibit the kinase activity of the latter. Interacts with host ATP6V1H; this interaction may play a role in CD4 endocytosis. Associates with the CD4-Nef-AP2 complex; this complex is required for CD4 internalization. Interacts with host AP2 subunit alpha and AP2 subunit sigma2. Interacts with TCR-zeta chain; this interaction up-regulates the Fas ligand (FasL) surface expression. Interacts with host HCK, LYN, and SRC; these interactions activate the Src family kinases. Interacts with MAP3K5; this interaction inhibits the Fas and TNFR-mediated death signals. Interacts with beta-COP and PTE1. Interacts with human RACK1; this increases Nef phosphorylation by PKC. Interacts with TP53; this interaction decreases the half-life of TP53, protecting the infected cell against p53-mediated apoptosis. In terms of processing, the virion-associated Nef proteins are cleaved by the viral protease to release the soluble C-terminal core protein. Nef is probably cleaved concomitantly with viral structural proteins on maturation of virus particles. Post-translationally, myristoylated. Phosphorylated on serine residues, probably by host PKCdelta and theta.

It localises to the host cell membrane. The protein resides in the virion. The protein localises to the secreted. Its subcellular location is the host Golgi apparatus membrane. Functionally, factor of infectivity and pathogenicity, required for optimal virus replication. Alters numerous pathways of T-lymphocyte function and down-regulates immunity surface molecules in order to evade host defense and increase viral infectivity. Alters the functionality of other immunity cells, like dendritic cells, monocytes/macrophages and NK cells. In terms of biological role, in infected CD4(+) T-lymphocytes, down-regulates the surface MHC-I, mature MHC-II, CD4, CD28, CCR5 and CXCR4 molecules. Mediates internalization and degradation of host CD4 through the interaction of with the cytoplasmic tail of CD4, the recruitment of AP-2 (clathrin adapter protein complex 2), internalization through clathrin coated pits, and subsequent transport to endosomes and lysosomes for degradation. Diverts host MHC-I molecules to the trans-Golgi network-associated endosomal compartments by an endocytic pathway to finally target them for degradation. MHC-I down-regulation may involve AP-1 (clathrin adapter protein complex 1) or possibly Src family kinase-ZAP70/Syk-PI3K cascade recruited by PACS2. In consequence infected cells are masked for immune recognition by cytotoxic T-lymphocytes. Decreasing the number of immune receptors also prevents reinfection by more HIV particles (superinfection). Down-regulates host SERINC3 and SERINC5 thereby excluding these proteins from the viral particles. Virion infectivity is drastically higher when SERINC3 or SERINC5 are excluded from the viral envelope, because these host antiviral proteins impair the membrane fusion event necessary for subsequent virion penetration. Bypasses host T-cell signaling by inducing a transcriptional program nearly identical to that of anti-CD3 cell activation. Interaction with TCR-zeta chain up-regulates the Fas ligand (FasL). Increasing surface FasL molecules and decreasing surface MHC-I molecules on infected CD4(+) cells send attacking cytotoxic CD8+ T-lymphocytes into apoptosis. Its function is as follows. Plays a role in optimizing the host cell environment for viral replication without causing cell death by apoptosis. Protects the infected cells from apoptosis in order to keep them alive until the next virus generation is ready to strike. Inhibits the Fas and TNFR-mediated death signals by blocking MAP3K5/ASK1. Decreases the half-life of TP53, protecting the infected cell against p53-mediated apoptosis. Inhibits the apoptotic signals regulated by the Bcl-2 family proteins through the formation of a Nef/PI3-kinase/PAK2 complex that leads to activation of PAK2 and induces phosphorylation of host BAD. Functionally, extracellular Nef protein targets CD4(+) T-lymphocytes for apoptosis by interacting with CXCR4 surface receptors. This chain is Protein Nef, found in Human immunodeficiency virus type 1 group M subtype B (isolate SF162) (HIV-1).